Here is a 330-residue protein sequence, read N- to C-terminus: DNA-directed RNA polymerase subunit alpha (330 aa).

An alpha N-terminal domain (alpha-NTD) region spans residues 1 to 229 (MKNLKFIKPF…DHFNVLVELS (229 aa)). Residues 245–330 (AHNYVLDLEI…HSVEEDKDKH (86 aa)) form an alpha C-terminal domain (alpha-CTD) region.

This sequence belongs to the RNA polymerase alpha chain family. In terms of assembly, homodimer. The RNAP catalytic core consists of 2 alpha, 1 beta, 1 beta' and 1 omega subunit. When a sigma factor is associated with the core the holoenzyme is formed, which can initiate transcription.

It carries out the reaction RNA(n) + a ribonucleoside 5'-triphosphate = RNA(n+1) + diphosphate. In terms of biological role, DNA-dependent RNA polymerase catalyzes the transcription of DNA into RNA using the four ribonucleoside triphosphates as substrates. This Aster yellows witches'-broom phytoplasma (strain AYWB) protein is DNA-directed RNA polymerase subunit alpha.